An 858-amino-acid polypeptide reads, in one-letter code: Neurofilament medium polypeptide (858 aa).

Ser2 is modified (N-acetylserine). Residues 2 to 99 (SYTMEPLGNP…KLSRSNEKEQ (98 aa)) are head. Positions 22 to 57 (ATYSRASASPSSGFRSQSWSRGSGSTVSSSYKRTNL) are disordered. Residues 30 to 54 (SPSSGFRSQSWSRGSGSTVSSSYKR) show a composition bias toward low complexity. Thr47 carries O-linked (GlcNAc) threonine glycosylation. An IF rod domain is found at 96-407 (EKEQLQGLND…KLLEGEETRF (312 aa)). The segment at 100–131 (LQGLNDRFAGYIEKVHYLEQQNKEIEAELAAL) is coil 1A. Positions 132–144 (RQKHAGRAQLGDA) are linker 1. The coil 1B stretch occupies residues 145–243 (YEQELRELRG…EEEVAELLAQ (99 aa)). Residues 244-260 (LQASHATVERKDYLKTD) are linker 12. A coil 2A region spans residues 261-282 (LTTALKEIRAQLECQSDHNMHQ). The interval 283 to 286 (AEEW) is linker 2. The tract at residues 287 to 407 (FKCRYAKLTE…KLLEGEETRF (121 aa)) is coil 2B. The tract at residues 408–858 (SAFSGSITGP…SHAVVKEIKE (451 aa)) is tail. An O-linked (GlcNAc) threonine glycan is attached at Thr427. Positions 478-788 (AAKAQEEEQE…VVTNGLDVSP (311 aa)) are disordered. 2 stretches are compositionally biased toward acidic residues: residues 484-500 (EEQEEEKAEEEAVEEEA) and 509-524 (AAEEEEKEEEEAEEEE). Residues 525-541 (AAKSDAAEEGGSKKEEI) are compositionally biased toward basic and acidic residues. Residues 542–555 (EEKEEGEEAEEEEA) are compositionally biased toward acidic residues. Over residues 556–572 (EAKGKAEEAGAKVEKVK) the composition is skewed to basic and acidic residues. A compositionally biased stretch (pro residues) spans 576-586 (AKSPPKSPPKS). A compositionally biased stretch (low complexity) spans 590–601 (EQAKAVQKAAAE). Over residues 602–623 (VGKDQKAEKAAEKAAKEEKAAS) the composition is skewed to basic and acidic residues. Residues 624-637 (PEKPATPKVTSPEK) are compositionally biased toward low complexity. Composition is skewed to basic and acidic residues over residues 651–664 (ITPEKVRSPEKPTT) and 675–727 (ASPE…KAVV). Low complexity predominate over residues 728–743 (EESITVTKVTKVTAEV). The segment covering 744 to 771 (EVSKEARKEDIAVNGEVEEKKDEAKEKE) has biased composition (basic and acidic residues).

Belongs to the intermediate filament family. Post-translationally, there are a number of repeats of the tripeptide K-S-P, NFM is phosphorylated on a number of the serines in this motif. It is thought that phosphorylation of NFM results in the formation of interfilament cross bridges that are important in the maintenance of axonal caliber. Phosphorylation seems to play a major role in the functioning of the larger neurofilament polypeptides (NF-M and NF-H), the levels of phosphorylation being altered developmentally and coincident with a change in the neurofilament function.

The protein localises to the cytoplasm. The protein resides in the cytoskeleton. It is found in the cell projection. It localises to the axon. Neurofilaments usually contain three intermediate filament proteins: NEFL, NEFM, and NEFH which are involved in the maintenance of neuronal caliber. May additionally cooperate with other neuronal intermediate filament proteins to form neuronal filamentous networks. This chain is Neurofilament medium polypeptide (NEFM), found in Gallus gallus (Chicken).